Here is a 793-residue protein sequence, read N- to C-terminus: Protein translocase subunit SecA 2 (793 aa).

Residues Q77, 95–99, and D493 contribute to the ATP site; that span reads GEGKT.

The protein belongs to the SecA family. Monomer and homodimer. Part of the essential Sec protein translocation apparatus which comprises SecA, SecYEG and auxiliary proteins SecDF. Other proteins may also be involved.

It is found in the cell membrane. The protein localises to the cytoplasm. It carries out the reaction ATP + H2O + cellular proteinSide 1 = ADP + phosphate + cellular proteinSide 2.. Its function is as follows. Part of the Sec protein translocase complex. Interacts with the SecYEG preprotein conducting channel. Has a central role in coupling the hydrolysis of ATP to the transfer of proteins into and across the cell membrane, serving as an ATP-driven molecular motor driving the stepwise translocation of polypeptide chains across the membrane. In Streptococcus sanguinis (strain SK36), this protein is Protein translocase subunit SecA 2.